The chain runs to 668 residues: tRNA 5-methylaminomethyl-2-thiouridine biosynthesis bifunctional protein MnmC (668 aa).

A tRNA (mnm(5)s(2)U34)-methyltransferase region spans residues 1–245; it reads MKHYSIQPAN…KREMLCGVME (245 aa). Positions 270 to 668 are FAD-dependent cmnm(5)s(2)U34 oxidoreductase; that stretch reads IGGGIACALL…LLKGKAVKAG (399 aa).

This sequence in the N-terminal section; belongs to the methyltransferase superfamily. tRNA (mnm(5)s(2)U34)-methyltransferase family. In the C-terminal section; belongs to the DAO family. Requires FAD as cofactor.

It localises to the cytoplasm. It carries out the reaction 5-aminomethyl-2-thiouridine(34) in tRNA + S-adenosyl-L-methionine = 5-methylaminomethyl-2-thiouridine(34) in tRNA + S-adenosyl-L-homocysteine + H(+). Functionally, catalyzes the last two steps in the biosynthesis of 5-methylaminomethyl-2-thiouridine (mnm(5)s(2)U) at the wobble position (U34) in tRNA. Catalyzes the FAD-dependent demodification of cmnm(5)s(2)U34 to nm(5)s(2)U34, followed by the transfer of a methyl group from S-adenosyl-L-methionine to nm(5)s(2)U34, to form mnm(5)s(2)U34. The chain is tRNA 5-methylaminomethyl-2-thiouridine biosynthesis bifunctional protein MnmC from Shigella boydii serotype 18 (strain CDC 3083-94 / BS512).